Here is a 175-residue protein sequence, read N- to C-terminus: ATP synthase subunit d, mitochondrial (175 aa).

At S2 the chain carries N-acetylserine.

As to quaternary structure, F-type ATP synthases have 2 components, the catalytic core F(1) and the membrane-embedded component F(0), linked together by a central stalk and a peripheral stalk. The central stalk, also called rotor shaft, is often seen as part of F(1). The peripheral stalk is seen as part of F(0). F(0) contains the membrane channel next to the rotor. F-type ATP synthases form dimers but each monomer functions independently in ATP generation. The dimer consists of 18 different polypeptides: ATP1 (subunit alpha, part of F(1), 3 molecules per monomer), ATP2 (subunit beta, part of F(1), 3 molecules per monomer), ATP3 (subunit gamma, part of the central stalk), ATP4 (subunit b, part of the peripheral stalk), ATP5/OSCP (subunit 5/OSCP, part of the peripheral stalk), ATP6 (subunit a, part of the peripheral stalk), ATP7 (subunit d, part of the peripheral stalk), ATP8 (subunit 8, part of the peripheral stalk), OLI1 (subunit c, part of the rotor, 10 molecules per monomer), ATP14 (subunit h, part of the peripheral stalk), ATP15 (subunit epsilon, part of the central stalk), ATP16 (subunit delta, part of the central stalk), ATP17 (subunit f, part of the peripheral stalk), ATP18 (subunit i/j, part of the peripheral stalk). Dimer-specific subunits are ATP19 (subunit k, at interface between monomers), ATP20 (subunit g, at interface between monomers), TIM11 (subunit e, at interface between monomers). Also contains subunit L.

Its subcellular location is the mitochondrion inner membrane. Functionally, mitochondrial membrane ATP synthase (F(1)F(0) ATP synthase or Complex V) produces ATP from ADP in the presence of a proton gradient across the membrane which is generated by electron transport complexes of the respiratory chain. F-type ATP synthases consist of two structural domains, F(1) - containing the extramembraneous catalytic core, and F(0) - containing the membrane proton channel, linked together by a central stalk and a peripheral stalk. During catalysis, ATP synthesis in the catalytic domain of F(1) is coupled via a rotary mechanism of the central stalk subunits to proton translocation. Part of the complex F(0) domain and the peripheral stalk, which acts as a stator to hold the catalytic alpha/ATP1(3)beta/ATP2(3) subcomplex and subunit a/ATP6 static relative to the rotary elements. This is ATP synthase subunit d, mitochondrial from Pichia angusta (Yeast).